Reading from the N-terminus, the 745-residue chain is Copper-exporting P-type ATPase B (745 aa).

The interval 1–76 (MNNGIDPENE…GMDHSHMDHE (76 aa)) is disordered. Residues 1–108 (MNNGIDPENE…HMGNFKQKFW (108 aa)) are Cytoplasmic-facing. The span at 36 to 76 (LQEHGKMENMDQHHTHGHMERHQQMDHGHMSGMDHSHMDHE) shows a compositional bias: basic and acidic residues. Tandem repeats lie at residues 60–71 (MDHGHMSGMDHS), 73–84 (MDHEDMSGMNHS), and 86–97 (MGHENMSGMDHS). Positions 60-97 (MDHGHMSGMDHSHMDHEDMSGMNHSHMGHENMSGMDHS) are 3 X 12 AA approximate repeats. A helical membrane pass occupies residues 109–128 (LSLILAIPIILFSPMMGMSF). Topologically, residues 129-139 (PFQVTFPGSNW) are extracellular. Residues 140–160 (VVLVLATILFIYGGQPFLSGA) form a helical membrane-spanning segment. At 161–170 (KMELKQKSPA) the chain is on the cytoplasmic side. The chain crosses the membrane as a helical span at residues 171–191 (MMTLIAMGITVAYVYSVYSFI). Topologically, residues 192-200 (ANLINPHTH) are extracellular. A helical membrane pass occupies residues 201–217 (VMDFFWELATLIVIMLL). The Cytoplasmic portion of the chain corresponds to 218–359 (GHWIEMNAVS…EFLSDKVAKW (142 aa)). Residues 360–379 (LFYVALVVGIIAFIAWLFLA) form a helical membrane-spanning segment. The Extracellular portion of the chain corresponds to 380–388 (NLPDALERM). A helical transmembrane segment spans residues 389–409 (VTVFIIACPHALGLAIPLVVA). Over 410–703 (RSTSIAAKNG…QNLWWGAGYN (294 aa)) the chain is Cytoplasmic. The 4-aspartylphosphate intermediate role is filled by aspartate 440. Residues aspartate 638 and aspartate 642 each contribute to the Mg(2+) site. Residues 704-721 (IIAIPLAAGILAPIGLIL) traverse the membrane as a helical segment. Over 722–723 (SP) the chain is Extracellular. Residues 724-744 (AVGAVLMSLSTVVVALNALTL) form a helical membrane-spanning segment. Residue lysine 745 is a topological domain, cytoplasmic.

Belongs to the cation transport ATPase (P-type) (TC 3.A.3) family. Type IB subfamily. Monomer.

The protein resides in the cell membrane. The enzyme catalyses Cu(+)(in) + ATP + H2O = Cu(+)(out) + ADP + phosphate + H(+). Inhibited by vanadate. In terms of biological role, involved in copper export. Can also export silver. This chain is Copper-exporting P-type ATPase B (copB), found in Enterococcus hirae (strain ATCC 9790 / DSM 20160 / JCM 8729 / LMG 6399 / NBRC 3181 / NCIMB 6459 / NCDO 1258 / NCTC 12367 / WDCM 00089 / R).